The primary structure comprises 434 residues: Nicotinate phosphoribosyltransferase (434 aa).

Histidine 242 carries the post-translational modification Phosphohistidine; by autocatalysis.

Belongs to the NAPRTase family. Post-translationally, transiently phosphorylated on a His residue during the reaction cycle. Phosphorylation strongly increases the affinity for substrates and increases the rate of nicotinate D-ribonucleotide production. Dephosphorylation regenerates the low-affinity form of the enzyme, leading to product release.

The catalysed reaction is nicotinate + 5-phospho-alpha-D-ribose 1-diphosphate + ATP + H2O = nicotinate beta-D-ribonucleotide + ADP + phosphate + diphosphate. The protein operates within cofactor biosynthesis; NAD(+) biosynthesis; nicotinate D-ribonucleotide from nicotinate: step 1/1. Functionally, catalyzes the synthesis of beta-nicotinate D-ribonucleotide from nicotinate and 5-phospho-D-ribose 1-phosphate at the expense of ATP. This Chelativorans sp. (strain BNC1) protein is Nicotinate phosphoribosyltransferase.